Here is a 245-residue protein sequence, read N- to C-terminus: tRNA pseudouridine synthase A (245 aa).

D52 functions as the Nucleophile in the catalytic mechanism. Substrate is bound at residue Y111.

The protein belongs to the tRNA pseudouridine synthase TruA family. Homodimer.

The catalysed reaction is uridine(38/39/40) in tRNA = pseudouridine(38/39/40) in tRNA. Its function is as follows. Formation of pseudouridine at positions 38, 39 and 40 in the anticodon stem and loop of transfer RNAs. This Zymomonas mobilis subsp. mobilis (strain ATCC 31821 / ZM4 / CP4) protein is tRNA pseudouridine synthase A.